The following is a 527-amino-acid chain: Dual specificity protein kinase shkA (527 aa).

Residues 45 to 304 form the Protein kinase domain; sequence ITTESILGDG…GIVSELEEII (260 aa). ATP-binding positions include 51-59 and lysine 72; that span reads LGDGSFGTV. Aspartate 167 serves as the catalytic Proton acceptor. The SH2 domain maps to 424–513; that stretch reads WFHGDISTSE…INTPCLGSRF (90 aa).

It belongs to the protein kinase superfamily. TKL Ser/Thr protein kinase family. SH2 domain-containing protein kinase subfamily.

It localises to the membrane. The enzyme catalyses L-seryl-[protein] + ATP = O-phospho-L-seryl-[protein] + ADP + H(+). It catalyses the reaction L-threonyl-[protein] + ATP = O-phospho-L-threonyl-[protein] + ADP + H(+). In terms of biological role, required for proper chemotaxis and phagocytosis; proper spatiotemporal control of F-actin levels in chemotaxing cells. Negative regulator of the PI3K (phosphatidylinositol 3 kinase) pathway. Predominantly phosphorylates serines and threonines and tyrosines at a lower level. This Dictyostelium discoideum (Social amoeba) protein is Dual specificity protein kinase shkA (shkA).